Consider the following 212-residue polypeptide: uncharacterized protein (212 aa).

It belongs to the flavoredoxin family. The cofactor is FMN.

This is an uncharacterized protein from Methanothermobacter thermautotrophicus (strain ATCC 29096 / DSM 1053 / JCM 10044 / NBRC 100330 / Delta H) (Methanobacterium thermoautotrophicum).